A 66-amino-acid chain; its full sequence is Alpha-conotoxin GID (66 aa).

The first 21 residues, 1–21, serve as a signal peptide directing secretion; that stretch reads MGMRMMFTVFLLVVLAATIVS. Residues 22–44 constitute a propeptide that is removed on maturation; it reads FTSDRASDGRNVAAKAFHRIGRT. Positions 45 to 48 are N-terminal tail important for activity on alpha-3-beta-2/CHRNA3-CHRNB2 and alpha-4-beta-2/CHRNA4-CHRNB2 nAChR; that stretch reads IRDE. Glu-48 is subject to 4-carboxyglutamate. Intrachain disulfides connect Cys-49–Cys-55 and Cys-50–Cys-63. The interval 51-53 is ser-Xaa-Pro motif, crucial for potent interaction with nAChR; that stretch reads SNP. A 4-hydroxyproline modification is found at Pro-60.

It belongs to the conotoxin A superfamily. In terms of processing, gamma-carboxyglutamation of Glu-48 seems to be not important for nAChR inhibition, since synthetic peptides without this modification do not show change in inhibition of alpha-7/CHRNA7 and alpha-3-beta-2/CHRNA3-CHRNB2 nAChR and show a 2.3-fold increase in inhibition of alpha-4-beta-2/CHRNA4-CHRNB2 nAChR. Post-translationally, hydroxylation of Pro-60 seems to be important for nAChR inhibition, since synthetic peptides without this modification show a small decrease in inhibition of alpha-7/CHRNA7 and alpha-3-beta-2/CHRNA3-CHRNB2 nAChR and a very important decrease in inhibition of alpha-4-beta-2/CHRNA4-CHRNB2 nAChR. An amidation of Cys-63 increases potency against alpha-7/CHRNA7 (2.6-fold) and alpha-3-beta-2/CHRNA3-CHRNB2 (2-fold) nAChR. On the other hand, the peptide has no more activity on alpha-4-beta-2/CHRNA4-CHRNB2 nAChR with an amidated Cys-63. Expressed by the venom duct.

Its subcellular location is the secreted. Its function is as follows. Alpha-conotoxins act on postsynaptic membranes, they bind to the nicotinic acetylcholine receptors (nAChR) and thus inhibit them. This toxin reversibly blocks alpha-3-beta-2/CHRNA3-CHRNB2 (IC(50)=3.1-5.1 nM), alpha-7/CHRNA7 (IC(50)=4.5-5.1 nM), and alpha-4-beta-2/CHRNA4-CHRNB2 (IC(50)=128.6-390 nM) nAChRs. The chain is Alpha-conotoxin GID from Conus geographus (Geography cone).